We begin with the raw amino-acid sequence, 310 residues long: Thioredoxin reductase (310 aa).

34-41 contributes to the FAD binding site; the sequence is NGIQPGGQ. Cysteine 135 and cysteine 138 form a disulfide bridge. 281-290 contributes to the FAD binding site; it reads DVQDKIYRQA.

Belongs to the class-II pyridine nucleotide-disulfide oxidoreductase family. Homodimer. FAD serves as cofactor.

Its subcellular location is the cytoplasm. The catalysed reaction is [thioredoxin]-dithiol + NADP(+) = [thioredoxin]-disulfide + NADPH + H(+). The chain is Thioredoxin reductase (trxB) from Rickettsia bellii (strain RML369-C).